A 20-amino-acid chain; its full sequence is Antifungal protein (20 aa).

This sequence belongs to the protease inhibitor I3 (leguminous Kunitz-type inhibitor) family.

Inhibits soybean trypsin. Has antifungal activity against R.cerealis, A.brassicae and A.niger, and weak antifungal activity against F.oxysporum. The chain is Antifungal protein from Cullen corylifolium (Malaysian scurfpea).